A 261-amino-acid chain; its full sequence is Ribosomal RNA small subunit methyltransferase J (261 aa).

Residues 129-130 (ER) and D182 each bind S-adenosyl-L-methionine.

This sequence belongs to the methyltransferase superfamily. RsmJ family.

The protein localises to the cytoplasm. It catalyses the reaction guanosine(1516) in 16S rRNA + S-adenosyl-L-methionine = N(2)-methylguanosine(1516) in 16S rRNA + S-adenosyl-L-homocysteine + H(+). Specifically methylates the guanosine in position 1516 of 16S rRNA. The protein is Ribosomal RNA small subunit methyltransferase J of Desulfotalea psychrophila (strain LSv54 / DSM 12343).